The sequence spans 255 residues: EEF1A lysine methyltransferase 4 (255 aa).

Positions 26 and 30 each coordinate S-adenosyl-L-methionine. Tyr-39 bears the Phosphotyrosine mark. S-adenosyl-L-methionine-binding positions include Trp-41, Gly-66, 88-89, 113-114, and Lys-130; these read DY and DV. The Required for methyltransferase activity motif lies at 129-134; the sequence is EKGTLD.

The protein belongs to the methyltransferase superfamily.

The catalysed reaction is L-lysyl-[protein] + S-adenosyl-L-methionine = N(6)-methyl-L-lysyl-[protein] + S-adenosyl-L-homocysteine + H(+). It carries out the reaction N(6)-methyl-L-lysyl-[protein] + S-adenosyl-L-methionine = N(6),N(6)-dimethyl-L-lysyl-[protein] + S-adenosyl-L-homocysteine + H(+). It catalyses the reaction N(6),N(6)-dimethyl-L-lysyl-[protein] + S-adenosyl-L-methionine = N(6),N(6),N(6)-trimethyl-L-lysyl-[protein] + S-adenosyl-L-homocysteine + H(+). Protein-lysine methyltransferase that efficiently catalyzes three successive methylations on 'Lys-36' in eukaryotic translation elongation factor 1 alpha (EEF1A1 or EEF1A2). In Mus musculus (Mouse), this protein is EEF1A lysine methyltransferase 4.